Reading from the N-terminus, the 250-residue chain is Biosynthetic peptidoglycan transglycosylase (250 aa).

The chain crosses the membrane as a helical span at residues 15–35 (AVLLFFVSSLGFVLLYRFVPV).

The protein belongs to the glycosyltransferase 51 family.

Its subcellular location is the cell inner membrane. It catalyses the reaction [GlcNAc-(1-&gt;4)-Mur2Ac(oyl-L-Ala-gamma-D-Glu-L-Lys-D-Ala-D-Ala)](n)-di-trans,octa-cis-undecaprenyl diphosphate + beta-D-GlcNAc-(1-&gt;4)-Mur2Ac(oyl-L-Ala-gamma-D-Glu-L-Lys-D-Ala-D-Ala)-di-trans,octa-cis-undecaprenyl diphosphate = [GlcNAc-(1-&gt;4)-Mur2Ac(oyl-L-Ala-gamma-D-Glu-L-Lys-D-Ala-D-Ala)](n+1)-di-trans,octa-cis-undecaprenyl diphosphate + di-trans,octa-cis-undecaprenyl diphosphate + H(+). The protein operates within cell wall biogenesis; peptidoglycan biosynthesis. Functionally, peptidoglycan polymerase that catalyzes glycan chain elongation from lipid-linked precursors. This chain is Biosynthetic peptidoglycan transglycosylase, found in Bdellovibrio bacteriovorus (strain ATCC 15356 / DSM 50701 / NCIMB 9529 / HD100).